The following is a 195-amino-acid chain: Porimin (195 aa).

The signal sequence occupies residues 1–23; the sequence is MALCARAALLLGVLQVLALLGAA. The Extracellular segment spans residues 24–152; the sequence is QDPTDAQGSA…PTKGKGSKFD (129 aa). N-linked (GlcNAc...) asparagine glycosylation is found at N36, N45, N51, N59, N109, and N115. Residues 99-127 form a disordered region; that stretch reads VTPTASKSTPNASASPNSTHTSASMTTPA. Over residues 101 to 126 the composition is skewed to polar residues; that stretch reads PTASKSTPNASASPNSTHTSASMTTP. The helical transmembrane segment at 153–173 threads the bilayer; sequence AGSFVGGIVLTLGVLSILYIG. Residues 174–195 lie on the Cytoplasmic side of the membrane; the sequence is CKMYYSRRGIRYRSIDEHDAII. At S187 the chain carries Phosphoserine.

This sequence belongs to the CD164 family.

It localises to the membrane. Its function is as follows. Implicated in oncotic cell death, characterized by cell swelling, organelle swelling, vacuolization and increased membrane permeability. This chain is Porimin (Tmem123), found in Mus musculus (Mouse).